A 424-amino-acid polypeptide reads, in one-letter code: Isoflavipucine cluster transcription factor ATEG_00326 (424 aa).

The zn(2)-C6 fungal-type DNA-binding region spans 10 to 38 (CDRCHGQKLRCIHSGGGPCVRCAKAKATC). Residues 265–286 (ARMQTPEGTPERTSESSPSGPP) are disordered.

The protein resides in the nucleus. Transcription factor that regulates the expression of the gene cluster that mediates the biosynthesis of isoflavipucine. The protein is Isoflavipucine cluster transcription factor ATEG_00326 of Aspergillus terreus (strain NIH 2624 / FGSC A1156).